Consider the following 134-residue polypeptide: Urease subunit beta (134 aa).

It belongs to the urease beta subunit family. Heterotrimer of UreA (gamma), UreB (beta) and UreC (alpha) subunits. Three heterotrimers associate to form the active enzyme.

It is found in the cytoplasm. The enzyme catalyses urea + 2 H2O + H(+) = hydrogencarbonate + 2 NH4(+). The protein operates within nitrogen metabolism; urea degradation; CO(2) and NH(3) from urea (urease route): step 1/1. The polypeptide is Urease subunit beta (Staphylococcus saprophyticus subsp. saprophyticus (strain ATCC 15305 / DSM 20229 / NCIMB 8711 / NCTC 7292 / S-41)).